The primary structure comprises 188 residues: MLQLHPSEIKDLVLNGGVIAYPTEAVYGLGCDPDNDTAIQKLLAVKQRPWQKGLILVASEFSQLVDYVDESQLSAEQLEFAFSKWPGPFTFVMPIKPHVSRYLCGEFDSIAVRVSAHDGVRALCQALGKPLVSTSANLAGEDPALSGDEILNAFEGKIDALVLGALGEQRQPSTIIDARSGKILRNGQ.

One can recognise a YrdC-like domain in the interval 3-188 (QLHPSEIKDL…RSGKILRNGQ (186 aa)).

This sequence belongs to the SUA5 family. TsaC subfamily.

The protein localises to the cytoplasm. It catalyses the reaction L-threonine + hydrogencarbonate + ATP = L-threonylcarbamoyladenylate + diphosphate + H2O. Functionally, required for the formation of a threonylcarbamoyl group on adenosine at position 37 (t(6)A37) in tRNAs that read codons beginning with adenine. Catalyzes the conversion of L-threonine, HCO(3)(-)/CO(2) and ATP to give threonylcarbamoyl-AMP (TC-AMP) as the acyladenylate intermediate, with the release of diphosphate. This chain is Threonylcarbamoyl-AMP synthase, found in Shewanella sp. (strain ANA-3).